Consider the following 505-residue polypeptide: Lysine--tRNA ligase (505 aa).

Positions 415 and 422 each coordinate Mg(2+).

This sequence belongs to the class-II aminoacyl-tRNA synthetase family. In terms of assembly, homodimer. It depends on Mg(2+) as a cofactor.

The protein localises to the cytoplasm. It catalyses the reaction tRNA(Lys) + L-lysine + ATP = L-lysyl-tRNA(Lys) + AMP + diphosphate. This is Lysine--tRNA ligase from Salmonella arizonae (strain ATCC BAA-731 / CDC346-86 / RSK2980).